Here is a 338-residue protein sequence, read N- to C-terminus: Serpentine receptor class alpha-32 (338 aa).

Helical transmembrane passes span 30–50, 63–83, 120–140, 152–172, 199–219, 249–269, and 289–309; these read VYVI…IHAI, ITHL…SYTI, RFLF…VILF, GEIL…LLHL, LTSY…MMWY, LNSL…FVLA, and TTPY…QWIG.

It belongs to the nematode receptor-like protein sra family.

The protein localises to the membrane. In Caenorhabditis elegans, this protein is Serpentine receptor class alpha-32 (sra-32).